A 463-amino-acid chain; its full sequence is Xanthine permease XanP (463 aa).

Transmembrane regions (helical) follow at residues 43–63 (LLAMFVAVITPALLICQALGL), 71–91 (IISMSLFASGVASIIQIKAWG), 93–113 (VGSGLLSIQGTSFNFVAPLIM), 126–146 (PTMMAALFGTLMLASCTEMVI), 156–176 (IITPLVSGVVVMIIGLSLIQV), 192–212 (TFGAPKNLLLAGVVLALIILL), 222–242 (VASLVIAMAAGYALAWFMGML), 260–280 (LYYGLGIEWSLLLPLMLVFMI), 352–372 (GFVVALMLIVLGLFPAVSGFV), 379–399 (VLGGATLVMFGTIAASGVRIV), 409–429 (ILIIALSLAVGLGVSQQPLIL), and 439–459 (LLSSGIAAGGITAIVLNLIFP).

This sequence belongs to the nucleobase:cation symporter-2 (NCS2) (TC 2.A.40) family.

The protein localises to the cell inner membrane. It carries out the reaction xanthine(in) + H(+)(in) = xanthine(out) + H(+)(out). Its function is as follows. Specific, proton motive force-dependent high-affinity transporter for xanthine. The chain is Xanthine permease XanP (xanP) from Escherichia coli O6:H1 (strain CFT073 / ATCC 700928 / UPEC).